Here is a 91-residue protein sequence, read N- to C-terminus: Class I hydrophobin 3 (91 aa).

The N-terminal stretch at 1 to 17 (MLFRLFTIPSIALGVLG) is a signal peptide. Cystine bridges form between cysteine 31–cysteine 70, cysteine 35–cysteine 61, cysteine 36–cysteine 53, and cysteine 71–cysteine 87.

The protein belongs to the fungal hydrophobin family. In terms of assembly, self-assembles to form functional amyloid fibrils called rodlets. Self-assembly into fibrillar rodlets occurs spontaneously at hydrophobic:hydrophilic interfaces and the rodlets further associate laterally to form amphipathic monolayers. Expressed in conidia.

The protein localises to the secreted. The protein resides in the cell wall. Functionally, aerial growth, conidiation, and dispersal of filamentous fungi in the environment rely upon a capability of their secreting small amphipathic proteins called hydrophobins (HPBs) with low sequence identity. Class I can self-assemble into an outermost layer of rodlet bundles on aerial cell surfaces, conferring cellular hydrophobicity that supports fungal growth, development and dispersal; whereas Class II form highly ordered films at water-air interfaces through intermolecular interactions but contribute nothing to the rodlet structure. HYD3 is a class I hydrophobin located on the conidial surface that activates specifically the humoral and cellular immunity of Metarhizium acridum's own host insect, Locusta migratoria manilensis (Meyen) but not that of other non-host insects. Improves the resistance of locusts to both specialist and generalist fungal pathogens (wide host range) when topically applied to the cuticle, but has no effect on the fungal resistance of other insects, including Spodoptera frugiperda and Galleria mellonella. The protein is Class I hydrophobin 3 of Metarhizium acridum (strain CQMa 102).